Here is a 156-residue protein sequence, read N- to C-terminus: RNA pyrophosphohydrolase (156 aa).

The region spanning 6–148 is the Nudix hydrolase domain; the sequence is NYRPNVAAIV…KKNIYVRVIK (143 aa). The Nudix box signature appears at 43 to 64; the sequence is GGIDKGESVKNALFRELKEEIG.

Belongs to the Nudix hydrolase family. RppH subfamily. A divalent metal cation is required as a cofactor.

In terms of biological role, accelerates the degradation of transcripts by removing pyrophosphate from the 5'-end of triphosphorylated RNA, leading to a more labile monophosphorylated state that can stimulate subsequent ribonuclease cleavage. This is RNA pyrophosphohydrolase from Campylobacter jejuni subsp. jejuni serotype O:2 (strain ATCC 700819 / NCTC 11168).